Reading from the N-terminus, the 310-residue chain is Ribose-phosphate pyrophosphokinase (310 aa).

ATP-binding positions include 34–36 and 93–94; these read DQE and RQ. The Mg(2+) site is built by His127 and Asp167. The active site involves Lys190. D-ribose 5-phosphate is bound by residues Arg192, Asp216, and 220–224; that span reads DSGGT.

This sequence belongs to the ribose-phosphate pyrophosphokinase family. Class I subfamily. In terms of assembly, homohexamer. Mg(2+) is required as a cofactor.

It localises to the cytoplasm. It carries out the reaction D-ribose 5-phosphate + ATP = 5-phospho-alpha-D-ribose 1-diphosphate + AMP + H(+). It functions in the pathway metabolic intermediate biosynthesis; 5-phospho-alpha-D-ribose 1-diphosphate biosynthesis; 5-phospho-alpha-D-ribose 1-diphosphate from D-ribose 5-phosphate (route I): step 1/1. Its function is as follows. Involved in the biosynthesis of the central metabolite phospho-alpha-D-ribosyl-1-pyrophosphate (PRPP) via the transfer of pyrophosphoryl group from ATP to 1-hydroxyl of ribose-5-phosphate (Rib-5-P). The chain is Ribose-phosphate pyrophosphokinase from Brucella melitensis biotype 1 (strain ATCC 23456 / CCUG 17765 / NCTC 10094 / 16M).